The chain runs to 214 residues: Adenylate kinase (214 aa).

Glycine 10–threonine 15 provides a ligand contact to ATP. Residues serine 30–valine 59 form an NMP region. Residues threonine 31, arginine 36, alanine 57–valine 59, glycine 85–arginine 88, and glutamine 92 each bind AMP. The interval glycine 126–aspartate 163 is LID. Residue arginine 127 participates in ATP binding. Positions 130 and 133 each coordinate Zn(2+). Residue threonine 136–tyrosine 137 participates in ATP binding. Zn(2+)-binding residues include cysteine 150 and cysteine 153. 2 residues coordinate AMP: arginine 160 and arginine 171. Lysine 199 is an ATP binding site.

The protein belongs to the adenylate kinase family. Monomer.

The protein localises to the cytoplasm. It carries out the reaction AMP + ATP = 2 ADP. It participates in purine metabolism; AMP biosynthesis via salvage pathway; AMP from ADP: step 1/1. In terms of biological role, catalyzes the reversible transfer of the terminal phosphate group between ATP and AMP. Plays an important role in cellular energy homeostasis and in adenine nucleotide metabolism. This chain is Adenylate kinase, found in Agathobacter rectalis (strain ATCC 33656 / DSM 3377 / JCM 17463 / KCTC 5835 / VPI 0990) (Eubacterium rectale).